The chain runs to 85 residues: Small ribosomal subunit protein uS17 (85 aa).

It belongs to the universal ribosomal protein uS17 family. Part of the 30S ribosomal subunit.

One of the primary rRNA binding proteins, it binds specifically to the 5'-end of 16S ribosomal RNA. The sequence is that of Small ribosomal subunit protein uS17 from Agathobacter rectalis (strain ATCC 33656 / DSM 3377 / JCM 17463 / KCTC 5835 / VPI 0990) (Eubacterium rectale).